We begin with the raw amino-acid sequence, 341 residues long: Phosphate acyltransferase (341 aa).

This sequence belongs to the PlsX family. Homodimer. Probably interacts with PlsY.

Its subcellular location is the cytoplasm. The enzyme catalyses a fatty acyl-[ACP] + phosphate = an acyl phosphate + holo-[ACP]. It functions in the pathway lipid metabolism; phospholipid metabolism. In terms of biological role, catalyzes the reversible formation of acyl-phosphate (acyl-PO(4)) from acyl-[acyl-carrier-protein] (acyl-ACP). This enzyme utilizes acyl-ACP as fatty acyl donor, but not acyl-CoA. This chain is Phosphate acyltransferase, found in Vibrio campbellii (strain ATCC BAA-1116).